The chain runs to 260 residues: Late transcription factor 1 (260 aa).

Belongs to the chordopoxvirinae VLTF-1 family. Interacts with the late transcription factors VLTF-2 and VLTF-3. Interacts with the late transcription elongation factor VLTF-4. Interacts with itself.

In terms of biological role, associates with RNA polymerase to initiate transcription from late gene promoters. The polypeptide is Late transcription factor 1 (OPG093) (Homo sapiens (Human)).